Here is a 750-residue protein sequence, read N- to C-terminus: Glycerophosphodiester phosphodiesterase GDPDL7 (750 aa).

The signal sequence occupies residues Met1–Ala17. GP-PDE domains are found at residues Pro41 to Ile339 and Ala355 to Leu654. Residues Asn134, Asn304, Asn603, and Asn716 are each glycosylated (N-linked (GlcNAc...) asparagine).

The protein belongs to the glycerophosphoryl diester phosphodiesterase family. In terms of tissue distribution, expressed in flowers and siliques.

It catalyses the reaction a sn-glycero-3-phosphodiester + H2O = an alcohol + sn-glycerol 3-phosphate + H(+). The protein is Glycerophosphodiester phosphodiesterase GDPDL7 of Arabidopsis thaliana (Mouse-ear cress).